The chain runs to 522 residues: Glutamate--cysteine ligase (522 aa).

This sequence belongs to the glutamate--cysteine ligase type 1 family. Type 1 subfamily.

It carries out the reaction L-cysteine + L-glutamate + ATP = gamma-L-glutamyl-L-cysteine + ADP + phosphate + H(+). The protein operates within sulfur metabolism; glutathione biosynthesis; glutathione from L-cysteine and L-glutamate: step 1/2. The polypeptide is Glutamate--cysteine ligase (Shewanella halifaxensis (strain HAW-EB4)).